Reading from the N-terminus, the 236-residue chain is GCN5-related N-acetyltransferase 8 (236 aa).

An N-acetyltransferase domain is found at 96-235; it reads ATITSSPSPD…DALEAFDQVN (140 aa). Residues 161–163, 169–174, 200–202, and Y207 each bind acetyl-CoA; these read IFV, RKGFGS, and NVN. Y207 (proton donor) is an active-site residue.

This sequence belongs to the acetyltransferase family. GNAT subfamily. Oligomer. In terms of tissue distribution, expressed throughout the plant.

It localises to the cytoplasm. Its subcellular location is the nucleus. It catalyses the reaction an N-terminal L-alpha-aminoacyl-[protein] + acetyl-CoA = N-terminal N(alpha)-acetyl-L-alpha-aminoacyl-[protein] + CoA + H(+). The catalysed reaction is L-lysyl-[protein] + acetyl-CoA = N(6)-acetyl-L-lysyl-[protein] + CoA + H(+). Functionally, probable protein acetyltransferase with dual specificity triggering both N-alpha-acetylation (NTA) and epsilon-lysine acetylation (KA). The protein is GCN5-related N-acetyltransferase 8 of Arabidopsis thaliana (Mouse-ear cress).